The sequence spans 345 residues: UDP-N-acetylenolpyruvoylglucosamine reductase (345 aa).

In terms of domain architecture, FAD-binding PCMH-type spans 27–197 (FDASAELAYE…TKVVFKLPKQ (171 aa)). Arginine 174 is an active-site residue. The active-site Proton donor is serine 245. The active site involves glutamate 341.

This sequence belongs to the MurB family. Requires FAD as cofactor.

It localises to the cytoplasm. The catalysed reaction is UDP-N-acetyl-alpha-D-muramate + NADP(+) = UDP-N-acetyl-3-O-(1-carboxyvinyl)-alpha-D-glucosamine + NADPH + H(+). The protein operates within cell wall biogenesis; peptidoglycan biosynthesis. In terms of biological role, cell wall formation. The sequence is that of UDP-N-acetylenolpyruvoylglucosamine reductase from Polynucleobacter asymbioticus (strain DSM 18221 / CIP 109841 / QLW-P1DMWA-1) (Polynucleobacter necessarius subsp. asymbioticus).